Consider the following 209-residue polypeptide: MSIENNIIKSLLEIKAIEVRKDKEKWFTWTSGIKSPIYCDNRLTISYPKVRNEIALSFKELIDTNFKDVQVIAGTATAGIPHAAWVSSLMNLPMVYVRNSSKQHGKTNQIEGLITKGSNVVIIEDLISTGKSSINVARCLREHGVNVLGIVAIFSYNLEIAKDAFMQENIKLFSLSNYDELINYMNEINQLNNNENQLLIDWRNGLNNK.

Residues Arg98, Lys102, His104, and 124 to 132 (EDLISTGKS) each bind 5-phospho-alpha-D-ribose 1-diphosphate. Ser128 provides a ligand contact to orotate.

Belongs to the purine/pyrimidine phosphoribosyltransferase family. PyrE subfamily. Homodimer. Mg(2+) is required as a cofactor.

The catalysed reaction is orotidine 5'-phosphate + diphosphate = orotate + 5-phospho-alpha-D-ribose 1-diphosphate. The protein operates within pyrimidine metabolism; UMP biosynthesis via de novo pathway; UMP from orotate: step 1/2. Its function is as follows. Catalyzes the transfer of a ribosyl phosphate group from 5-phosphoribose 1-diphosphate to orotate, leading to the formation of orotidine monophosphate (OMP). The protein is Orotate phosphoribosyltransferase of Malacoplasma penetrans (strain HF-2) (Mycoplasma penetrans).